A 136-amino-acid chain; its full sequence is MNTTATTVSRGRRPPRTLYRGDPGMWSWVCHRISGATIFFFLFVHVLDAAMLRVSPQTYNAVLATYKTPIVGLMEYGLVAAVLFHALNGIRVILIDFWSEGPRYQRLMLWIIGSVFLLLMVPAGVVVGIHMWEHFR.

The next 3 helical transmembrane spans lie at 32 to 52 (RISGATIFFFLFVHVLDAAML), 70 to 90 (IVGLMEYGLVAAVLFHALNGI), and 109 to 129 (LWIIGSVFLLLMVPAGVVVGI). Residue histidine 85 participates in heme binding.

This sequence belongs to the cytochrome b560 family. As to quaternary structure, part of an enzyme complex containing four subunits: a flavoprotein (SdhA), an iron-sulfur protein (SdhB), plus two membrane-anchoring proteins (SdhC and SdhD). Requires heme as cofactor.

It is found in the cell membrane. Functionally, membrane-anchoring subunit of succinate dehydrogenase 2 (Sdh2). Sdh2 may catalyze the two-electron oxidation of succinate to fumarate with a corresponding reduction of quinone to quinol under low oxygen conditions, when the primary aerobic succinate dehydrogenase (Sdh1) is inhibited. Sdh2 seems to be the generator of the proton motive force (PMF) under hypoxia. In Mycobacterium tuberculosis (strain ATCC 25618 / H37Rv), this protein is Succinate dehydrogenase 2 membrane subunit SdhC.